The sequence spans 111 residues: UPF0342 protein SAG1376 (111 aa).

Positions 52–63 are enriched in polar residues; that stretch reads QEMMQSGQMPSQ. The tract at residues 52–71 is disordered; it reads QEMMQSGQMPSQEEQDEMSK.

It belongs to the UPF0342 family.

The sequence is that of UPF0342 protein SAG1376 from Streptococcus agalactiae serotype V (strain ATCC BAA-611 / 2603 V/R).